Here is a 311-residue protein sequence, read N- to C-terminus: Delta(1)-pyrroline-2-carboxylate reductase 2 (311 aa).

Belongs to the ornithine cyclodeaminase/mu-crystallin family.

The enzyme catalyses L-proline + NAD(+) = 1-pyrroline-2-carboxylate + NADH + H(+). The catalysed reaction is L-proline + NADP(+) = 1-pyrroline-2-carboxylate + NADPH + H(+). Its function is as follows. Catalyzes the reduction of Delta(1)-pyrroline-2-carboxylate (Pyr2C) to L-proline, using preferentially NADPH over NADH as the electron donor. May be involved in a degradation pathway that converts trans-3-hydroxy-L-proline (t3LHyp) to L-proline. The sequence is that of Delta(1)-pyrroline-2-carboxylate reductase 2 from Burkholderia ambifaria (strain ATCC BAA-244 / DSM 16087 / CCUG 44356 / LMG 19182 / AMMD) (Burkholderia cepacia (strain AMMD)).